Here is a 104-residue protein sequence, read N- to C-terminus: Thioredoxin-2 (104 aa).

A Thioredoxin domain is found at 2–104; that stretch reads VTQLKSASEY…AIKQAIASNV (103 aa). Catalysis depends on nucleophile residues Cys31 and Cys34. An intrachain disulfide couples Cys31 to Cys34. Ser62 is modified (phosphoserine). Glycyl lysine isopeptide (Lys-Gly) (interchain with G-Cter in ubiquitin) cross-links involve residues Lys67 and Lys97.

It belongs to the thioredoxin family. As to quaternary structure, monomer. Part of the heterodimeric LMA1 complex together with the proteinase inhibitor PBI2. LMA1 binds to the ATPase SEC18. Reversible disulfide bond formation between Cys-31 and Cys-34, reverted by thioredoxin reductase TRR1 using NADPH as hydrogen donor.

The protein resides in the cytoplasm. It localises to the golgi apparatus membrane. The protein localises to the nucleus. In terms of biological role, participates as a hydrogen donor in redox reactions through the reversible oxidation of its active center dithiol to a disulfide, accompanied by the transfer of 2 electrons and 2 protons. It is involved in many cellular processes, including deoxyribonucleotide synthesis, repair of oxidatively damaged proteins, protein folding, sulfur metabolism, and redox homeostasis. Thioredoxin-dependent enzymes include phosphoadenosine-phosphosulfate reductase MET16, alkyl-hydroperoxide reductase DOT5, thioredoxin peroxidases TSA1 and TSA2, alkyl hydroperoxide reductase AHP1, and peroxiredoxin HYR1. Thioredoxin is also involved in protection against reducing stress. As part of the LMA1 complex, it is involved in the facilitation of vesicle fusion such as homotypic vacuole and ER-derived COPII vesicle fusion with the Golgi. This activity does not require the redox mechanism. Through its capacity to inactivate the stress response transcription factor YAP1 and its regulator the hydroperoxide stress sensor HYR1, it is involved in feedback regulation of stress response gene expression upon oxidative stress. The sequence is that of Thioredoxin-2 (TRX2) from Saccharomyces cerevisiae (strain ATCC 204508 / S288c) (Baker's yeast).